The sequence spans 69 residues: ATP synthase F(0) complex subunit e, mitochondrial (69 aa).

Lys34 is modified (N6-acetyllysine). Ser66 carries the phosphoserine modification.

Belongs to the ATPase e subunit family. Component of the ATP synthase complex composed at least of ATP5F1A/subunit alpha, ATP5F1B/subunit beta, ATP5MC1/subunit c (homooctomer), MT-ATP6/subunit a, MT-ATP8/subunit 8, ATP5ME/subunit e, ATP5MF/subunit f, ATP5MG/subunit g, ATP5MK/subunit k, ATP5MJ/subunit j, ATP5F1C/subunit gamma, ATP5F1D/subunit delta, ATP5F1E/subunit epsilon, ATP5PF/subunit F6, ATP5PB/subunit b, ATP5PD/subunit d, ATP5PO/subunit OSCP. ATP synthase complex consists of a soluble F(1) head domain (subunits alpha(3) and beta(3)) - the catalytic core - and a membrane F(0) domain - the membrane proton channel (subunits c, a, 8, e, f, g, k and j). These two domains are linked by a central stalk (subunits gamma, delta, and epsilon) rotating inside the F1 region and a stationary peripheral stalk (subunits F6, b, d, and OSCP).

It localises to the mitochondrion. The protein resides in the mitochondrion inner membrane. Subunit e, of the mitochondrial membrane ATP synthase complex (F(1)F(0) ATP synthase or Complex V) that produces ATP from ADP in the presence of a proton gradient across the membrane which is generated by electron transport complexes of the respiratory chain. ATP synthase complex consist of a soluble F(1) head domain - the catalytic core - and a membrane F(1) domain - the membrane proton channel. These two domains are linked by a central stalk rotating inside the F(1) region and a stationary peripheral stalk. During catalysis, ATP synthesis in the catalytic domain of F(1) is coupled via a rotary mechanism of the central stalk subunits to proton translocation. In vivo, can only synthesize ATP although its ATP hydrolase activity can be activated artificially in vitro. Part of the complex F(0) domain. This chain is ATP synthase F(0) complex subunit e, mitochondrial, found in Homo sapiens (Human).